A 368-amino-acid chain; its full sequence is FAD-dependent monooxygenase phomE (368 aa).

Residue A11 coordinates FAD. Catalysis depends on residues R140 and Y178. Positions 249 and 262 each coordinate FAD.

It belongs to the paxM FAD-dependent monooxygenase family. In terms of assembly, monomer. It depends on FAD as a cofactor.

Functionally, FAD-dependent monooxygenase; part of the gene cluster that mediates the biosynthesis of the phomopsins, a group of hexapeptide mycotoxins which infects lupins and causes lupinosis disease in livestock. The role of phomE within the phomopsins biosynthesis pathway has still to be determined. The pathway starts with the processing of the precursor phomA by several endopeptidases including kexin proteases as well as the cluster-specific S41 family peptidase phomP1 and the oligopeptidase phomG to produce 10 identical copies of the hexapeptide Tyr-Val-Ile-Pro-Ile-Asp. After being excised from the precursor peptide, the core peptides are cyclized and modified post-translationally by enzymes encoded within the gene cluster. The timing and order of proteolysis of the phomA precursor and PTMs are still unknown. Two tyrosinase-like enzymes, phomQ1 and phomQ2, catalyze the chlorination and hydroxylation of Tyr, respectively. PhomYb, is proposed to be involved in the construction of the macrocyclic structure. The other 4 ustYa family proteins may be involved in PTMs that generate the unique structure of phomopsin A. PhomYa is required for the hydroxylation of C-beta of Tyr. PhomYc, phomYd, and phomYe are responsible for the biosynthesis of 2,3-dehydroisoleucine (dIle), 2,3-dehydroaspartic acid (dAsp), and 3,4-dehydroproline (dPro), respectively. While dIle formation by phomYc is indispensable for the installation of dAsp by phomYd, the order of the other PTMs have not been elucidated yet. Most of the biosynthetic enzymes likely have broad substrate specificity, and thus, there might be a metabolic grid from a precursor to phomopsin A. The enzyme(s) responsible for the biosynthesis of 3,4-dehydrovaline (dVal) have also not been identified yet. Finally, phomM acts as an S-adenosylmethionine-dependent alpha-N-methyltransferase that catalyzes two successive N-methylation reactions, converting N-desmethyl-phomopsin A to phomopsin A and phomopsin A further to an N,N-dimethylated congener called phomopsin E. The sequence is that of FAD-dependent monooxygenase phomE from Diaporthe leptostromiformis (Lupinosis disease fungus).